The following is a 690-amino-acid chain: Elongation factor G (690 aa).

The tr-type G domain occupies 8–283 (DKYRNIGIMA…AVVDFLPSPL (276 aa)). GTP-binding positions include 17 to 24 (AHIDAGKT), 81 to 85 (DTPGH), and 135 to 138 (NKLD).

It belongs to the TRAFAC class translation factor GTPase superfamily. Classic translation factor GTPase family. EF-G/EF-2 subfamily.

The protein localises to the cytoplasm. Functionally, catalyzes the GTP-dependent ribosomal translocation step during translation elongation. During this step, the ribosome changes from the pre-translocational (PRE) to the post-translocational (POST) state as the newly formed A-site-bound peptidyl-tRNA and P-site-bound deacylated tRNA move to the P and E sites, respectively. Catalyzes the coordinated movement of the two tRNA molecules, the mRNA and conformational changes in the ribosome. This chain is Elongation factor G, found in Zymomonas mobilis subsp. mobilis (strain ATCC 31821 / ZM4 / CP4).